A 254-amino-acid chain; its full sequence is Translation initiation factor 2 subunit alpha (254 aa).

The 72-residue stretch at 10 to 81 (GDLVVVKITE…ERKNVDLSLK (72 aa)) folds into the S1 motif domain.

Belongs to the eIF-2-alpha family. In terms of assembly, heterotrimer composed of an alpha, a beta and a gamma chain.

EIF-2 functions in the early steps of protein synthesis by forming a ternary complex with GTP and initiator tRNA. The polypeptide is Translation initiation factor 2 subunit alpha (Thermoplasma volcanium (strain ATCC 51530 / DSM 4299 / JCM 9571 / NBRC 15438 / GSS1)).